Consider the following 62-residue polypeptide: Conotoxin Sr5.6 (62 aa).

The N-terminal stretch at 1–22 (MRCLPVFVILLLLIASASSVDA) is a signal peptide. Residues 23-44 (QLKTKDDVPLTSVHDNAKGTQH) constitute a propeptide that is removed on maturation. Proline amide is present on proline 61.

It belongs to the conotoxin T superfamily. In terms of processing, contains 2 disulfide bonds that can be either 'C1-C3, C2-C4' or 'C1-C4, C2-C3', since these disulfide connectivities have been observed for conotoxins with cysteine framework V (for examples, see AC P0DQQ7 and AC P81755). Expressed by the venom duct.

It localises to the secreted. This Conus spurius (Alphabet cone) protein is Conotoxin Sr5.6.